A 63-amino-acid chain; its full sequence is UPF0337 protein RA1131 (63 aa).

The segment at 1–63 is disordered; it reads MGSAKDKVAG…DAVKGAVDKT (63 aa). Residues 34 to 49 are compositionally biased toward low complexity; the sequence is AKGAAQEAKGGAQQAK. Residues 51 to 63 show a composition bias toward basic and acidic residues; the sequence is KLKDAVKGAVDKT.

It belongs to the UPF0337 (CsbD) family.

This chain is UPF0337 protein RA1131, found in Rhizobium meliloti (strain 1021) (Ensifer meliloti).